A 573-amino-acid chain; its full sequence is Protein translocase subunit SecD (573 aa).

Residues 13–33 (YLSVFLVMLIGIYLLVFFTGD) form a helical membrane-spanning segment. Residues 127 to 200 (AQPAAEEPQP…PPAEAPATDP (74 aa)) form a disordered region. Composition is skewed to pro residues over residues 135-154 (QPAP…PPPA) and 161-194 (SPQP…PPAE). 5 helical membrane passes run 385–405 (AGMI…LLYY), 410–430 (LLTA…LVLL), 441–461 (AGIA…VVFF), 489–509 (IVSG…LAIG), and 514–534 (FAFT…LVTW).

This sequence belongs to the SecD/SecF family. SecD subfamily. In terms of assembly, forms a complex with SecF. Part of the essential Sec protein translocation apparatus which comprises SecA, SecYEG and auxiliary proteins SecDF. Other proteins may also be involved.

Its subcellular location is the cell membrane. Part of the Sec protein translocase complex. Interacts with the SecYEG preprotein conducting channel. SecDF uses the proton motive force (PMF) to complete protein translocation after the ATP-dependent function of SecA. The polypeptide is Protein translocase subunit SecD (Mycobacterium tuberculosis (strain CDC 1551 / Oshkosh)).